The chain runs to 332 residues: Glucokinase (332 aa).

15 to 20 (ADIGGT) lines the ATP pocket.

Belongs to the bacterial glucokinase family.

It localises to the cytoplasm. It catalyses the reaction D-glucose + ATP = D-glucose 6-phosphate + ADP + H(+). In Campylobacter jejuni subsp. doylei (strain ATCC BAA-1458 / RM4099 / 269.97), this protein is Glucokinase.